Consider the following 147-residue polypeptide: MKPLNLVLGLCILVGCFLSCECHRGPRRHDPRGPFPPPPPPHGPGIGRPHPPPFGPGIGRPPPPPFGPGIGRPPPPPPCPPVPPHPRPPSNPSPPPTPSIPPTGPPTTVQATTMPAASISITTPTARDSTDIFWRLWELINSLLQQE.

The signal sequence occupies residues 1–22 (MKPLNLVLGLCILVGCFLSCEC). The disordered stretch occupies residues 27–128 (RRHDPRGPFP…ISITTPTARD (102 aa)). Residues 33–105 (GPFPPPPPPH…PTPSIPPTGP (73 aa)) show a composition bias toward pro residues. Repeat copies occupy residues 43 to 54 (GPGIGRPHPPPF), 55 to 66 (GPGIGRPPPPPF), and 67 to 78 (GPGIGRPPPPPP). The interval 43–78 (GPGIGRPHPPPFGPGIGRPPPPPFGPGIGRPPPPPP) is 3 X 12 AA tandem repeats of G-P-G-I-G-R-P-[HP]-P-P-P-[PF]. Over residues 108–127 (TVQATTMPAASISITTPTAR) the composition is skewed to polar residues.

The protein belongs to the PROL1/PROL3 family. As to expression, secreted into saliva by submaxillary gland.

The protein localises to the secreted. In terms of biological role, may play a role in protection or detoxification. In Mus musculus (Mouse), this protein is Submaxillary gland androgen-regulated protein 3A (Smr3a).